Here is a 66-residue protein sequence, read N- to C-terminus: Phylloseptin-H5 (66 aa).

Residues 1–22 form the signal peptide; it reads MAFLKKSLFLVLFLGLVSLSIC. Positions 23–44 are excised as a propeptide; the sequence is EEEKRETEEEENEQEDDDKSEE. A disordered region spans residues 24-44; that stretch reads EEKRETEEEENEQEDDDKSEE. Over residues 30 to 41 the composition is skewed to acidic residues; that stretch reads EEEENEQEDDDK. The residue at position 65 (phenylalanine 65) is a Phenylalanine amide.

Expressed by the skin glands.

The protein resides in the secreted. Has antibacterial activity against the Gram-negative bacteria E.coli and P.aeruginosa, and the Gram-positive bacterium S.aureus. No hemolytic activity. In Pithecopus hypochondrialis (Orange-legged leaf frog), this protein is Phylloseptin-H5 (psn7).